A 970-amino-acid polypeptide reads, in one-letter code: Toxin subunit YenC2 (970 aa).

RHS repeat units follow at residues 168–182 (AGQC…GLIQ), 297–311 (GVVT…TQRL), 329–343 (LQDL…GNVL), 361–375 (VPEN…YQLV), 408–422 (NYTR…GNLM), 500–514 (DDSE…SQRI), 580–594 (NDQI…TCSS), 606–620 (SMEE…AVWA), and 640–654 (DATG…YYQP). Residues 610–690 (YYPYGGTAVW…PLRLTDPDGM (81 aa)) are RHS-repeat associated core domain. Positions 849–950 (TEAFITGIRS…YNCSGIISGL (102 aa)) are deaminase domain.

This sequence belongs to the RHS family. Semipurified toxin complex consists of at least YenA1-YenA2-YenB-YenC1-YenC2-Chi1-Chi2. YenB and the N-terminus of YenC2 form a large hollow shell of beta-strands. The shell is closed at both ends, within which the C-terminus of YenC2 is probably found. The C-terminal region dissociates from the YenB-YenC2 complex at pH 4.5 but not 7.5. The Yen-TC:K9 subcomplex is about 26 nm tall and 22 nm in diameter with 5-fold symmetry and 5 copies of YenA1, YenA2, Chi1 and Chi2; the chitinase subunits may be solvent accessible on the exterior the complex. The Yen-TC:K9 subcomplex has no insecticidal activity. The native complex with additional YenB, YenC1 and YenC2 subunits is 16 nm taller and is insecticidal; the toxicity-conferring subunits are present at about 1 copy each.

It localises to the secreted. Its activity is regulated as follows. Toxin complex is secreted when grown at 25 degrees Celsius or less; at higher temperatures the proteins are present intracellularly but not secreted. Its function is as follows. Part of an orally active toxin complex (TC) with strong insecticidal effects on larvae of the Coleoptera Costelytra zealandica, Acrossidius tasmania and Adoryphorus couloni and some Lepidoptera larvae. The TC has an endochitinase activity. This Yersinia entomophaga protein is Toxin subunit YenC2.